Consider the following 72-residue polypeptide: Translation initiation factor IF-1 (72 aa).

The S1-like domain occupies 1-72; that stretch reads MAKEGAIEVE…TRGRIVYRYK (72 aa).

The protein belongs to the IF-1 family. In terms of assembly, component of the 30S ribosomal translation pre-initiation complex which assembles on the 30S ribosome in the order IF-2 and IF-3, IF-1 and N-formylmethionyl-tRNA(fMet); mRNA recruitment can occur at any time during PIC assembly.

The protein localises to the cytoplasm. In terms of biological role, one of the essential components for the initiation of protein synthesis. Stabilizes the binding of IF-2 and IF-3 on the 30S subunit to which N-formylmethionyl-tRNA(fMet) subsequently binds. Helps modulate mRNA selection, yielding the 30S pre-initiation complex (PIC). Upon addition of the 50S ribosomal subunit IF-1, IF-2 and IF-3 are released leaving the mature 70S translation initiation complex. This chain is Translation initiation factor IF-1, found in Corynebacterium efficiens (strain DSM 44549 / YS-314 / AJ 12310 / JCM 11189 / NBRC 100395).